Consider the following 243-residue polypeptide: Venom nerve growth factor 1 (243 aa).

The first 18 residues, M1–A18, serve as a signal peptide directing secretion. Positions A19–R125 are excised as a propeptide. A compositionally biased stretch (basic and acidic residues) spans G47–D66. The disordered stretch occupies residues G47 to L69. Disulfide bonds link C139/C204, C182/C232, and C192/C234. N-linked (GlcNAc...) asparagine glycosylation occurs at N148.

The protein belongs to the NGF-beta family. As to quaternary structure, homodimer; non-covalently linked. As to expression, expressed by the venom gland.

It localises to the secreted. Functionally, nerve growth factor is important for the development and maintenance of the sympathetic and sensory nervous systems. It stimulates division and differentiation of sympathetic and embryonic sensory neurons as well as basal forebrain cholinergic neurons in the brain. Its relevance in the snake venom is not clear. However, it has been shown to inhibit metalloproteinase-dependent proteolysis of platelet glycoprotein Ib alpha, suggesting a metalloproteinase inhibition to prevent metalloprotease autodigestion and/or protection against prey proteases. Binds a lipid between the two protein chains in the homodimer. The lipid-bound form promotes histamine relase from mouse mast cells, contrary to the lipid-free form. The chain is Venom nerve growth factor 1 from Oxyuranus microlepidotus (Inland taipan).